A 598-amino-acid chain; its full sequence is Elongation factor 4 (598 aa).

One can recognise a tr-type G domain in the interval 2–184 (TKIRNFSIIA…AVVDRIPPPS (183 aa)). GTP contacts are provided by residues 14–19 (DHGKST) and 131–134 (NKID).

It belongs to the TRAFAC class translation factor GTPase superfamily. Classic translation factor GTPase family. LepA subfamily.

Its subcellular location is the cell inner membrane. The catalysed reaction is GTP + H2O = GDP + phosphate + H(+). Functionally, required for accurate and efficient protein synthesis under certain stress conditions. May act as a fidelity factor of the translation reaction, by catalyzing a one-codon backward translocation of tRNAs on improperly translocated ribosomes. Back-translocation proceeds from a post-translocation (POST) complex to a pre-translocation (PRE) complex, thus giving elongation factor G a second chance to translocate the tRNAs correctly. Binds to ribosomes in a GTP-dependent manner. The sequence is that of Elongation factor 4 from Syntrophobacter fumaroxidans (strain DSM 10017 / MPOB).